We begin with the raw amino-acid sequence, 129 residues long: Large ribosomal subunit protein bL12 (129 aa).

The protein belongs to the bacterial ribosomal protein bL12 family. In terms of assembly, homodimer. Part of the ribosomal stalk of the 50S ribosomal subunit. Forms a multimeric L10(L12)X complex, where L10 forms an elongated spine to which 2 to 4 L12 dimers bind in a sequential fashion. Binds GTP-bound translation factors.

Functionally, forms part of the ribosomal stalk which helps the ribosome interact with GTP-bound translation factors. Is thus essential for accurate translation. The protein is Large ribosomal subunit protein bL12 of Synechococcus sp. (strain CC9605).